A 1866-amino-acid polypeptide reads, in one-letter code: MPAVEKSVITDWKRLWPMVSGIHYETPQDTVREELMNVASELQAGVLQFKPKNASSLELGTLLKEKKQEKLLPFTERLQDLLDLESAQCWEILCYYLTQEYRGSASLLTQLISTETNMAKLHEDIRHYYSLERMVVLKIVKNLIVFHQVPNHPYHREYRAVVEKITIPRLRDSYLDQLESLICEVPPRKLMAGECFHSAERLVAWSERNAREINEVLHILLVLAEHLPMGLEQIKRIFAACKQHSFGKMQSYLDDSQPYHQEIIRSLSYSELMLVLKCLDFEKPEKHSDLIEKLIEDLQVDIASMYHRPEHGPLLLAWMLLRLRGTNDADDASSLLRCRQLGKRAVDLKCFVQLHLIARHSMYADDSMLSRIVRRTIYNQVGYLCDLFDGDGSCARYEGIYELLCELVSWPHLAKDFCSREDDGPCSLYKTLLENFPLELTHLSKLALSLTKAGQGNYVKSQLEALPILALRYDESQHKLREVDTNEFELLASVQPFQQIDFTIPAGTSCTAIQHPSGCFMHFRFPVNYFDALHHEINCLLRETGHLHGDFESSERIRNVEAGLRFLESAVKLSQSISGISAEMVHPTEMCVDLLHTFKSVQYPPVGLLSSCLNVCTALLPLVDEEIFSRISNLHILPTVSPGSHYDFKMYANANGVGFESRFLGSVIDNVEKKRERYEFLLSYIGFLRAYSNLKRNRQIQMEIPGLIFLLKDVFPHLHTWHFSSQVERNKIYFEILSFICDILDLFNTAKESNCKQRELLVKVCVYSLLNLENGLILLRFVGVGNAYVQYTMELETNWMQQQPHGLMMLVRLSMRILMQLLRLKEEVYGNSETLSPLEALIYTQPKQRDTLRIIPTVCSYMSNIFDRWLPILSCRLLKRIALQFNMSLLACLDMEADQIRLTFMQKLPDELESDSIKIAILELVDACIAKQPGVTEAFFKVNYALDKRSRSFFSKDCVPNIGESIVTYMRDFLDALQVDPLTIQQALPAKIMTIFHSMWKHNLQMLVDDLVKDKQFWKKLCSPLFSELQPNLRIYTQLLNIISIEVYTGNGNNAALLDVMNKFFEQKNFGPWLNYVFNMPKVPAVKNLSSSDHLPDWICCLQAFKDLIVILLKKQPKFVTIPESQFKLMAQKCLVVLVDRSNYLEDMRPFIILAELYVFILLEFKHAYTDSLEEEQTLMDLLLQLMNRICACYEDQHVRAKEACLAIVTKCTHLYTDLLIRDSSIALRFLNSVVGIICSELQHMENSVSLEKSQGLNNSDSSDSKTSTNSLILCLNLLKAVATIFHNDGPGNWDLPFVSVRLFQRLVRCVSRTLPLFSKQVLSVQLLDVLIVFAKGHCSVEFLHCDVGEYLWLKLLPPRELLQSKHEFTKTTAADAEGWTVEQWWPVYARGIELVTIIYEKHKKCFLEDAFQFVGIHAVFLEDALLLSKQSLEPSAMYLIKAAVNLVASLTEHHKEWKQDSDLSLANLMRAVQSLLCHTSSLFHQQKNLKCLLAGRRSQLEILRSTEALIVDDELISACNDLTDIIISCVKALLRFSPDLMELLCCSAYEPSKHSILLDVKFGAPKLNEENLTLTFGIVLNLVNIYVKALNMQNHGFSEVPLNSLPNVEHSGDNDDPEVCVGNQTNRTFSKPLSNVSISTGTCPASELLSNMDGQLCLLALEHLLMLVASQAICIIRSPNLETLWKQIVRRDISNELLIFNEFVRRKVILDYKENRSPWLRRKHGLCKLKCVDPVRSSSSSSRSSEIVRRSNTNNELRVNVVRRLHLQQQQRTPPPQNFDMSSDLSPIAAAQGAAMTTSLDGRKRLYPAQQAGDAFLEDELAAIELQYFPPPTEPGYCELSQVQVVEEDYLQLMSALFNVMPHCD.

Belongs to the Nup188 family. Part of the nuclear pore complex (NPC).

It is found in the nucleus. Its subcellular location is the nuclear pore complex. Its function is as follows. Component of the nuclear pore complex (NPC), a complex required for the trafficking across the nuclear envelope. Required for proper protein transport into the nucleus. This chain is Nucleoporin Nup188, found in Drosophila melanogaster (Fruit fly).